The sequence spans 341 residues: Glyceraldehyde-3-phosphate dehydrogenase 3 (341 aa).

NAD(+) is bound by residues 13-14 (RI), aspartate 35, and arginine 85. D-glyceraldehyde 3-phosphate contacts are provided by residues 157–159 (SCT), threonine 188, 217–218 (TG), and arginine 240. Cysteine 158 serves as the catalytic Nucleophile. Asparagine 322 contacts NAD(+).

It belongs to the glyceraldehyde-3-phosphate dehydrogenase family. As to quaternary structure, homotetramer.

It localises to the cytoplasm. It catalyses the reaction D-glyceraldehyde 3-phosphate + phosphate + NAD(+) = (2R)-3-phospho-glyceroyl phosphate + NADH + H(+). It participates in carbohydrate degradation; glycolysis; pyruvate from D-glyceraldehyde 3-phosphate: step 1/5. The sequence is that of Glyceraldehyde-3-phosphate dehydrogenase 3 (gpd-3) from Caenorhabditis elegans.